Reading from the N-terminus, the 597-residue chain is CTP synthase (597 aa).

The segment at methionine 1–leucine 272 is amidoligase domain. A CTP-binding site is contributed by serine 18. A UTP-binding site is contributed by serine 18. Serine 19 to isoleucine 24 is a binding site for ATP. Tyrosine 59 lines the L-glutamine pocket. Aspartate 76 contacts ATP. Aspartate 76 and glutamate 146 together coordinate Mg(2+). CTP contacts are provided by residues aspartate 153–glutamate 155, lysine 193–glutamine 198, and lysine 229. UTP-binding positions include lysine 193 to glutamine 198 and lysine 229. The region spanning asparagine 299 to glycine 543 is the Glutamine amidotransferase type-1 domain. Glycine 363 lines the L-glutamine pocket. Cysteine 390 acts as the Nucleophile; for glutamine hydrolysis in catalysis. L-glutamine-binding positions include leucine 391–glutamine 394, glutamate 414, and arginine 471. Residues histidine 516 and glutamate 518 contribute to the active site.

Belongs to the CTP synthase family. In terms of assembly, homotetramer.

The enzyme catalyses UTP + L-glutamine + ATP + H2O = CTP + L-glutamate + ADP + phosphate + 2 H(+). It carries out the reaction L-glutamine + H2O = L-glutamate + NH4(+). It catalyses the reaction UTP + NH4(+) + ATP = CTP + ADP + phosphate + 2 H(+). The protein operates within pyrimidine metabolism; CTP biosynthesis via de novo pathway; CTP from UDP: step 2/2. With respect to regulation, allosterically activated by GTP, when glutamine is the substrate; GTP has no effect on the reaction when ammonia is the substrate. The allosteric effector GTP functions by stabilizing the protein conformation that binds the tetrahedral intermediate(s) formed during glutamine hydrolysis. Inhibited by the product CTP, via allosteric rather than competitive inhibition. In terms of biological role, catalyzes the ATP-dependent amination of UTP to CTP with either L-glutamine or ammonia as the source of nitrogen. Regulates intracellular CTP levels through interactions with the four ribonucleotide triphosphates. The sequence is that of CTP synthase from Chlorobium luteolum (strain DSM 273 / BCRC 81028 / 2530) (Pelodictyon luteolum).